We begin with the raw amino-acid sequence, 109 residues long: Flagellar hook-basal body complex protein FliE (109 aa).

This sequence belongs to the FliE family.

The protein localises to the bacterial flagellum basal body. This Pseudomonas fluorescens (strain Pf0-1) protein is Flagellar hook-basal body complex protein FliE.